The following is a 79-amino-acid chain: Conotoxin Cl9.4 (79 aa).

The first 23 residues, 1–23, serve as a signal peptide directing secretion; that stretch reads MNCYLILTVALLLTSAMTGTTTA. Residues 24-37 constitute a propeptide that is removed on maturation; sequence GQLNKKGVTLREDD. 3 cysteine pairs are disulfide-bonded: Cys41-Cys58, Cys46-Cys68, and Cys48-Cys73.

In terms of tissue distribution, expressed by the venom duct.

Its subcellular location is the secreted. The sequence is that of Conotoxin Cl9.4 from Californiconus californicus (California cone).